We begin with the raw amino-acid sequence, 267 residues long: Acetyl-coenzyme A carboxylase carboxyl transferase subunit beta, chloroplastic (267 aa).

The CoA carboxyltransferase N-terminal domain occupies 12-267; the sequence is LWKKCDSCNI…TIHMILDLHN (256 aa). The Zn(2+) site is built by Cys-16, Cys-19, Cys-35, and Cys-38. The segment at 16 to 38 adopts a C4-type zinc-finger fold; the sequence is CDSCNILISKFDFYKHDKVCPEC.

The protein belongs to the AccD/PCCB family. In terms of assembly, acetyl-CoA carboxylase is a heterohexamer composed of biotin carboxyl carrier protein, biotin carboxylase and 2 subunits each of ACCase subunit alpha and ACCase plastid-coded subunit beta (accD). The cofactor is Zn(2+).

It localises to the plastid. Its subcellular location is the chloroplast stroma. It carries out the reaction N(6)-carboxybiotinyl-L-lysyl-[protein] + acetyl-CoA = N(6)-biotinyl-L-lysyl-[protein] + malonyl-CoA. Its pathway is lipid metabolism; malonyl-CoA biosynthesis; malonyl-CoA from acetyl-CoA: step 1/1. Its function is as follows. Component of the acetyl coenzyme A carboxylase (ACC) complex. Biotin carboxylase (BC) catalyzes the carboxylation of biotin on its carrier protein (BCCP) and then the CO(2) group is transferred by the transcarboxylase to acetyl-CoA to form malonyl-CoA. This Cyanidium caldarium (Red alga) protein is Acetyl-coenzyme A carboxylase carboxyl transferase subunit beta, chloroplastic.